Reading from the N-terminus, the 365-residue chain is Mannonate dehydratase 1 (365 aa).

It belongs to the mannonate dehydratase family. It depends on Fe(2+) as a cofactor. Mn(2+) is required as a cofactor.

It carries out the reaction D-mannonate = 2-dehydro-3-deoxy-D-gluconate + H2O. Its pathway is carbohydrate metabolism; pentose and glucuronate interconversion. In terms of biological role, catalyzes the dehydration of D-mannonate. The chain is Mannonate dehydratase 1 from Bacillus licheniformis (strain ATCC 14580 / DSM 13 / JCM 2505 / CCUG 7422 / NBRC 12200 / NCIMB 9375 / NCTC 10341 / NRRL NRS-1264 / Gibson 46).